We begin with the raw amino-acid sequence, 149 residues long: Protein SprT-like (149 aa).

In terms of domain architecture, SprT-like spans 5-143 (DYVKQVSLED…CGLCRGKLLL (139 aa)). Position 64 (H64) interacts with Zn(2+). Residue E65 is part of the active site. Position 68 (H68) interacts with Zn(2+).

This sequence belongs to the SprT family. Zn(2+) is required as a cofactor.

The protein localises to the cytoplasm. The polypeptide is Protein SprT-like (Streptococcus pneumoniae (strain Hungary19A-6)).